The following is a 602-amino-acid chain: Elongation factor 4 (602 aa).

The tr-type G domain occupies 7–189 (SKIRNFCIIA…AIVRRVPAPQ (183 aa)). GTP is bound by residues 19 to 24 (DHGKST) and 136 to 139 (NKVD).

Belongs to the TRAFAC class translation factor GTPase superfamily. Classic translation factor GTPase family. LepA subfamily.

It is found in the cell inner membrane. It carries out the reaction GTP + H2O = GDP + phosphate + H(+). Its function is as follows. Required for accurate and efficient protein synthesis under certain stress conditions. May act as a fidelity factor of the translation reaction, by catalyzing a one-codon backward translocation of tRNAs on improperly translocated ribosomes. Back-translocation proceeds from a post-translocation (POST) complex to a pre-translocation (PRE) complex, thus giving elongation factor G a second chance to translocate the tRNAs correctly. Binds to ribosomes in a GTP-dependent manner. The chain is Elongation factor 4 from Prochlorococcus marinus (strain MIT 9312).